The primary structure comprises 96 residues: Small ribosomal subunit protein bS6 (96 aa).

Belongs to the bacterial ribosomal protein bS6 family.

Binds together with bS18 to 16S ribosomal RNA. This chain is Small ribosomal subunit protein bS6, found in Acidothermus cellulolyticus (strain ATCC 43068 / DSM 8971 / 11B).